We begin with the raw amino-acid sequence, 316 residues long: Type II restriction enzyme BsuBI (316 aa).

Belongs to the BsuBI/PstI type II restriction endonuclease family. Homodimer. Mg(2+) is required as a cofactor.

The enzyme catalyses Endonucleolytic cleavage of DNA to give specific double-stranded fragments with terminal 5'-phosphates.. Its function is as follows. A P subtype restriction enzyme that recognizes the double-stranded sequence 5'-CTGCAG-3' and cleaves after A-5. This chain is Type II restriction enzyme BsuBI (hsdBR), found in Bacillus subtilis.